The sequence spans 872 residues: Bifunctional uridylyltransferase/uridylyl-removing enzyme (872 aa).

A uridylyltransferase region spans residues 1–332 (MALPNKVKKL…PKHHQPIIQE (332 aa)). Residues 333–691 (LDRNFERIGN…VSNKAMHGGT (359 aa)) form a uridylyl-removing region. Residues 450–572 (VDEHTHRLIN…VKTERQLDYL (123 aa)) enclose the HD domain. ACT domains lie at 692–773 (QVFV…FKKN) and 799–872 (LIEI…AETE).

Belongs to the GlnD family. Mg(2+) is required as a cofactor.

It carries out the reaction [protein-PII]-L-tyrosine + UTP = [protein-PII]-uridylyl-L-tyrosine + diphosphate. It catalyses the reaction [protein-PII]-uridylyl-L-tyrosine + H2O = [protein-PII]-L-tyrosine + UMP + H(+). With respect to regulation, uridylyltransferase (UTase) activity is inhibited by glutamine, while glutamine activates uridylyl-removing (UR) activity. Modifies, by uridylylation and deuridylylation, the PII regulatory proteins (GlnB and homologs), in response to the nitrogen status of the cell that GlnD senses through the glutamine level. Under low glutamine levels, catalyzes the conversion of the PII proteins and UTP to PII-UMP and PPi, while under higher glutamine levels, GlnD hydrolyzes PII-UMP to PII and UMP (deuridylylation). Thus, controls uridylylation state and activity of the PII proteins, and plays an important role in the regulation of nitrogen assimilation and metabolism. This chain is Bifunctional uridylyltransferase/uridylyl-removing enzyme, found in Pseudoalteromonas translucida (strain TAC 125).